The primary structure comprises 488 residues: Serine protease HTR4 (488 aa).

The N-terminal stretch at 1 to 35 (MSRSKMSSQRLWAVRAQFLLLWLLLWAAPVPWAEA) is a signal peptide. The region spanning 40-118 (VSLPCPDACD…RAWLGTCGCA (79 aa)) is the IGFBP N-terminal domain. Intrachain disulfides connect C44-C70, C48-C72, C53-C73, C59-C76, C84-C98, and C92-C115. Residues 213-373 (GSGFIVSEDG…IPSDRIRQFL (161 aa)) are serine protease. Active-site charge relay system residues include H229, D259, and S337. The PDZ domain maps to 384–476 (KAPLQKKYLG…LSIIVLRGSQ (93 aa)).

This sequence belongs to the peptidase S1C family.

The protein localises to the secreted. Its function is as follows. Serine protease. This is Serine protease HTR4 (Htra4) from Rattus norvegicus (Rat).